Reading from the N-terminus, the 508-residue chain is Maturase K (508 aa).

It belongs to the intron maturase 2 family. MatK subfamily.

It is found in the plastid. It localises to the chloroplast. In terms of biological role, usually encoded in the trnK tRNA gene intron. Probably assists in splicing its own and other chloroplast group II introns. This Cunninghamia lanceolata (China fir) protein is Maturase K.